Reading from the N-terminus, the 336-residue chain is Glucokinase (336 aa).

12–17 (ADIGGT) is a binding site for ATP.

The protein belongs to the bacterial glucokinase family.

It is found in the cytoplasm. The enzyme catalyses D-glucose + ATP = D-glucose 6-phosphate + ADP + H(+). In Helicobacter pylori (strain J99 / ATCC 700824) (Campylobacter pylori J99), this protein is Glucokinase.